Reading from the N-terminus, the 586-residue chain is ATPase family AAA domain-containing protein 3A (586 aa).

Disordered stretches follow at residues 1–55 (MSWL…PTGL) and 111–134 (QAEE…QYQD). Ser2 carries the N-acetylserine modification. Residues 2–50 (SWLFGINKGPKGEGAGPPPPLPPAQPGAEGGGDRGLGDRPAPKDKWSNF) form a required for interaction with the inner surface of the mitochondrial outer membrane region. At 2 to 246 (SWLFGINKGP…FRAFVTDWDK (245 aa)) the chain is on the mitochondrial intermembrane side. The span at 17–26 (GPPPPLPPAQ) shows a compositional bias: pro residues. Composition is skewed to basic and acidic residues over residues 32 to 48 (GGDR…DKWS) and 111 to 125 (QAEE…ETRQ). Residues 86-219 (QLEQQSKLKE…QIRLKAAEHR (134 aa)) adopt a coiled-coil conformation. Residues 247 to 264 (VTATVAGLTLLAVGVYSA) traverse the membrane as a helical segment. At 265-586 (KNATLVAGRF…PGRGDEPSPS (322 aa)) the chain is on the mitochondrial matrix side. The interval 290–305 (RITVLEALRHPIQVSR) is S100B-binding. Ser321 carries the post-translational modification Phosphoserine. Residue 352–359 (GPPGTGKT) coordinates ATP. Lys491 is modified (N6-acetyllysine).

This sequence belongs to the AAA ATPase family. Can form homooligomers. Homodimer formation at the N-terminus may be regulated by ATP and is required for the interaction with the inner surface of the mitochondrial outer membrane and correct mitochondrial homeostasis. Interacts with components of the mitochondrial ribosome and with other proteins involved in mitochondrial RNA metabolism. May also interact with protein involved in lipid metabolism, including STARD9. May interact with FAM210A. Interacts with GADD45GIP1. Interacts with S100B in a Ca(+2)- and Zn(+2)-dependent manner; this interaction probably occurs in the cytosol prior to mitochondrial targeting. S100B could assist ATAD3A cytoplasmic processing, preventing aggregation and favoring mitochondrial localization. Interacts with HSP60/HSPD1. Forms heterooligomers with ATAD3B; this interaction may affect ATAD3A activity. Interacts with CLPB. Interacts with EIF2AK3/PERK; ATAD3A and EIF2S1/eIF-2-alpha occupy a common binding site within the cytoplasmic loop of EIF2AK3/PERK, leading to prevent EIF2AK3/PERK association with its substrate EIF2S1/eIF-2-alpha. In terms of tissue distribution, overexpressed in lung adenocarcinomas (at protein level).

The protein localises to the mitochondrion inner membrane. It is found in the mitochondrion matrix. It localises to the mitochondrion nucleoid. The catalysed reaction is ATP + H2O = ADP + phosphate + H(+). Its function is as follows. Essential for mitochondrial network organization, mitochondrial metabolism and cell growth at organism and cellular level. May play an important role in mitochondrial protein synthesis. May also participate in mitochondrial DNA replication. May bind to mitochondrial DNA D-loops and contribute to nucleoid stability. Required for enhanced channeling of cholesterol for hormone-dependent steroidogenesis. Involved in mitochondrial-mediated antiviral innate immunity. Required to protect mitochondria from the PERK-mediated unfolded protein response: specifically inhibits the activity of EIF2AK3/PERK at mitochondria-endoplasmic reticulum contact sites, thereby providing a safe haven for mitochondrial protein translation during endoplasmic reticulum stress. Ability to inhibit EIF2AK3/PERK is independent of its ATPase activity. Also involved in the mitochondrial DNA damage response by promoting signaling between damaged genomes and the mitochondrial membrane, leading to activation of the integrated stress response (ISR). The sequence is that of ATPase family AAA domain-containing protein 3A from Homo sapiens (Human).